A 239-amino-acid polypeptide reads, in one-letter code: MLKLLILKRIFLDYIFDGFKQALFLLFNADESVISAIKTTLLSSSISIVLALLIGFPLGFILGFFEFKLKRFIKLIVDTSLSFPTVAVGLILYALISSRGPLGEFGLLFTIKALILGQFILALPIVIALFSNLIENMNKKHFLLIKSFHLSPLKLVLTMIYELRFALISVVALAYGRIVAEVGVAMIVGGNIKYDTRTITTAISLETNKGEFASGIALALVLILIAFCLNFITHKLKRT.

In terms of domain architecture, ABC transmembrane type-1 spans 37-233 (IKTTLLSSSI…LIAFCLNFIT (197 aa)). The next 5 helical transmembrane spans lie at 45–65 (SISIVLALLIGFPLGFILGFF), 76–96 (IVDTSLSFPTVAVGLILYALI), 114–134 (LILGQFILALPIVIALFSNLI), 168–188 (ISVVALAYGRIVAEVGVAMIV), and 212–232 (FASGIALALVLILIAFCLNFI).

It belongs to the binding-protein-dependent transport system permease family. In terms of assembly, the complex is composed of two ATP-binding proteins (TupC), two transmembrane proteins (TupB) and a solute-binding protein (TupA).

It localises to the cell inner membrane. Part of an ABC transporter complex involved in ultra-high affinity tungstate uptake. Probably responsible for the translocation of the substrate across the membrane. This is Tungstate uptake system permease protein TupB from Campylobacter jejuni subsp. jejuni serotype O:2 (strain ATCC 700819 / NCTC 11168).